The primary structure comprises 447 residues: MSMTPREIVHELNRHIIGQDDAKRAVAIALRNRWRRMQLPAELRAEVTPKNILMIGPTGVGKTEIARRLAKLANAPFIKVEATKFTEVGYVGRDVESIIRDLADAALKMLREQEIVRVRHRAEDAAEDRILDALLPQARVSSFSEEAQQSSGDSNTRQLFRKRLREGQLDDKEIEIEVAESMGVDIAAPPGMEEMTNQLQSLFANMGKGKRKSRKLKVKEALKMVRDEEAGRLVNEEELKAKALEAVEQHGIVFIDEIDKVAKRGNVGGADVSREGVQRDLLPLIEGCTVNTKLGMVKTDHILFIASGAFHLSKPSDLVPELQGRLPIRVELKALTPEDFERILKEPHASLTEQYRELLKTEGLHIEFADEGLKRLAEIAFQVNEKTENIGARRLHTLLERLLEEVSFSAGDLASTHDETPIHIDAAYVNSHLGELAQNEDLSRYIL.

ATP contacts are provided by residues Ile-17, 59-64 (GVGKTE), Asp-256, Glu-321, and Arg-393.

Belongs to the ClpX chaperone family. HslU subfamily. A double ring-shaped homohexamer of HslV is capped on each side by a ring-shaped HslU homohexamer. The assembly of the HslU/HslV complex is dependent on binding of ATP.

The protein localises to the cytoplasm. In terms of biological role, ATPase subunit of a proteasome-like degradation complex; this subunit has chaperone activity. The binding of ATP and its subsequent hydrolysis by HslU are essential for unfolding of protein substrates subsequently hydrolyzed by HslV. HslU recognizes the N-terminal part of its protein substrates and unfolds these before they are guided to HslV for hydrolysis. In Pseudomonas entomophila (strain L48), this protein is ATP-dependent protease ATPase subunit HslU.